A 265-amino-acid polypeptide reads, in one-letter code: Hydroxyethylthiazole kinase (265 aa).

Residue M50 participates in substrate binding. Residues R125 and T171 each contribute to the ATP site. G198 lines the substrate pocket.

Belongs to the Thz kinase family. It depends on Mg(2+) as a cofactor.

The enzyme catalyses 5-(2-hydroxyethyl)-4-methylthiazole + ATP = 4-methyl-5-(2-phosphooxyethyl)-thiazole + ADP + H(+). It functions in the pathway cofactor biosynthesis; thiamine diphosphate biosynthesis; 4-methyl-5-(2-phosphoethyl)-thiazole from 5-(2-hydroxyethyl)-4-methylthiazole: step 1/1. In terms of biological role, catalyzes the phosphorylation of the hydroxyl group of 4-methyl-5-beta-hydroxyethylthiazole (THZ). This chain is Hydroxyethylthiazole kinase, found in Salmonella typhimurium (strain LT2 / SGSC1412 / ATCC 700720).